Here is a 493-residue protein sequence, read N- to C-terminus: Cytoplasmic tRNA 2-thiolation protein 2 (493 aa).

Position 489 is a phosphoserine (Ser-489).

Belongs to the CTU2/NCS2 family. In terms of assembly, interacts with NCS6 and URM1. May act by forming a heterodimer with NCS6.

It localises to the cytoplasm. It participates in tRNA modification; 5-methoxycarbonylmethyl-2-thiouridine-tRNA biosynthesis. Functionally, plays a central role in 2-thiolation of mcm(5)S(2)U at tRNA wobble positions of tRNA(Lys), tRNA(Glu) and tRNA(Gln). May act by forming a heterodimer with NCS6 that ligates sulfur from thiocarboxylated URM1 onto the uridine of tRNAs at wobble position. Prior mcm(5) tRNA modification by the elongator complex is required for 2-thiolation. May also be involved in protein urmylation. This is Cytoplasmic tRNA 2-thiolation protein 2 from Saccharomyces cerevisiae (strain RM11-1a) (Baker's yeast).